The sequence spans 510 residues: ATP synthase subunit alpha (510 aa).

Residue 170-177 participates in ATP binding; that stretch reads GDRQTGKT.

Belongs to the ATPase alpha/beta chains family. In terms of assembly, F-type ATPases have 2 components, CF(1) - the catalytic core - and CF(0) - the membrane proton channel. CF(1) has five subunits: alpha(3), beta(3), gamma(1), delta(1), epsilon(1). CF(0) has three main subunits: a(1), b(2) and c(9-12). The alpha and beta chains form an alternating ring which encloses part of the gamma chain. CF(1) is attached to CF(0) by a central stalk formed by the gamma and epsilon chains, while a peripheral stalk is formed by the delta and b chains.

It is found in the cell inner membrane. It catalyses the reaction ATP + H2O + 4 H(+)(in) = ADP + phosphate + 5 H(+)(out). In terms of biological role, produces ATP from ADP in the presence of a proton gradient across the membrane. The alpha chain is a regulatory subunit. This chain is ATP synthase subunit alpha, found in Caulobacter sp. (strain K31).